A 280-amino-acid polypeptide reads, in one-letter code: Adenosylcobinamide-GDP ribazoletransferase (280 aa).

A run of 7 helical transmembrane segments spans residues 4-24 (YLLA…GITM), 34-54 (IFFY…VAYA), 58-78 (VFPG…ITGF), 108-128 (TLGT…YGSI), 136-156 (IAAF…IAEV), 197-217 (LIGF…IGLI), and 254-274 (ITAL…YLGG).

This sequence belongs to the CobS family. Mg(2+) is required as a cofactor.

It is found in the cell membrane. It carries out the reaction alpha-ribazole + adenosylcob(III)inamide-GDP = adenosylcob(III)alamin + GMP + H(+). The enzyme catalyses alpha-ribazole 5'-phosphate + adenosylcob(III)inamide-GDP = adenosylcob(III)alamin 5'-phosphate + GMP + H(+). It participates in cofactor biosynthesis; adenosylcobalamin biosynthesis; adenosylcobalamin from cob(II)yrinate a,c-diamide: step 7/7. In terms of biological role, joins adenosylcobinamide-GDP and alpha-ribazole to generate adenosylcobalamin (Ado-cobalamin). Also synthesizes adenosylcobalamin 5'-phosphate from adenosylcobinamide-GDP and alpha-ribazole 5'-phosphate. This is Adenosylcobinamide-GDP ribazoletransferase from Methanosarcina mazei (strain ATCC BAA-159 / DSM 3647 / Goe1 / Go1 / JCM 11833 / OCM 88) (Methanosarcina frisia).